The sequence spans 151 residues: Deoxyuridine 5'-triphosphate nucleotidohydrolase (151 aa).

Residues 70-72 (RSG), Asn83, 87-89 (LID), and Met97 contribute to the substrate site.

It belongs to the dUTPase family. Requires Mg(2+) as cofactor.

It catalyses the reaction dUTP + H2O = dUMP + diphosphate + H(+). It functions in the pathway pyrimidine metabolism; dUMP biosynthesis; dUMP from dCTP (dUTP route): step 2/2. Functionally, this enzyme is involved in nucleotide metabolism: it produces dUMP, the immediate precursor of thymidine nucleotides and it decreases the intracellular concentration of dUTP so that uracil cannot be incorporated into DNA. In Histophilus somni (strain 129Pt) (Haemophilus somnus), this protein is Deoxyuridine 5'-triphosphate nucleotidohydrolase.